The sequence spans 371 residues: Cytokine receptor-like factor 2 (371 aa).

An N-terminal signal peptide occupies residues 1–22 (MGRLVLLWGAAVFLLGGWMALG). Topologically, residues 23 to 231 (QGGAAEGVQI…PTPPKPKLSK (209 aa)) are extracellular. N-linked (GlcNAc...) asparagine glycans are attached at residues asparagine 47 and asparagine 55. The cysteines at positions 71 and 84 are disulfide-linked. N-linked (GlcNAc...) asparagine glycosylation is found at asparagine 101 and asparagine 169. The region spanning 118–211 (KPSSPKHVRF…DWSEVTCWQR (94 aa)) is the Fibronectin type-III domain. The cysteines at positions 180 and 218 are disulfide-linked. The WSXWS motif signature appears at 200–204 (PSDWS). A helical transmembrane segment spans residues 232–252 (FILISSLAILLMVSLLLLSLW). Residues 253 to 371 (KLWRVKKFLI…VMNDRSYVAL (119 aa)) are Cytoplasmic-facing. A Box 1 motif motif is present at residues 261-269 (LIPSVPDPK). The span at 322-336 (ESPRMLDPQTEEKEA) shows a compositional bias: basic and acidic residues. A disordered region spans residues 322 to 347 (ESPRMLDPQTEEKEASGGSLQLPHQP).

The protein belongs to the type I cytokine receptor family. Type 5 subfamily. As to quaternary structure, heterodimer of CRLF2 and IL7R. As to expression, expressed in heart, skeletal muscle, kidney and adult and fetal liver. Primarily expressed in dendrites and monocytes. Weakly expressed in T-cells.

The protein localises to the cell membrane. It localises to the secreted. Its function is as follows. Receptor for thymic stromal lymphopoietin (TSLP). Forms a functional complex with TSLP and IL7R which is capable of stimulating cell proliferation through activation of STAT3 and STAT5. Also activates JAK2. Implicated in the development of the hematopoietic system. The polypeptide is Cytokine receptor-like factor 2 (CRLF2) (Homo sapiens (Human)).